Consider the following 491-residue polypeptide: mRNA cleavage and polyadenylation factor clp1 (491 aa).

ATP-binding residues include E28 and K78. Residues 128-160 (RAAAAQAQQQHPTHHQQQQQGRGAGAGVARSKP) are disordered. Positions 130-148 (AAAQAQQQHPTHHQQQQQG) are enriched in low complexity. An ATP-binding site is contributed by 171–176 (GVGKTS).

The protein belongs to the Clp1 family. Clp1 subfamily. As to quaternary structure, component of a pre-mRNA cleavage factor complex. Interacts directly with PCF11.

It localises to the nucleus. In terms of biological role, required for endonucleolytic cleavage during polyadenylation-dependent pre-mRNA 3'-end formation. The polypeptide is mRNA cleavage and polyadenylation factor clp1 (paa-7) (Neurospora crassa (strain ATCC 24698 / 74-OR23-1A / CBS 708.71 / DSM 1257 / FGSC 987)).